A 174-amino-acid chain; its full sequence is uncharacterized protein (174 aa).

This is an uncharacterized protein from Aquifex aeolicus (strain VF5).